Consider the following 156-residue polypeptide: Small ribosomal subunit protein uS7 (156 aa).

The protein belongs to the universal ribosomal protein uS7 family. In terms of assembly, part of the 30S ribosomal subunit. Contacts proteins S9 and S11.

Its function is as follows. One of the primary rRNA binding proteins, it binds directly to 16S rRNA where it nucleates assembly of the head domain of the 30S subunit. Is located at the subunit interface close to the decoding center, probably blocks exit of the E-site tRNA. The sequence is that of Small ribosomal subunit protein uS7 from Streptococcus pyogenes serotype M1.